Here is a 137-residue protein sequence, read N- to C-terminus: Large ribosomal subunit protein uL16c (137 aa).

The protein belongs to the universal ribosomal protein uL16 family. As to quaternary structure, part of the 50S ribosomal subunit.

It localises to the plastid. This chain is Large ribosomal subunit protein uL16c (rpl16), found in Helicosporidium sp. subsp. Simulium jonesii (Green alga).